The sequence spans 526 residues: Peptide chain release factor 3 (526 aa).

In terms of domain architecture, tr-type G spans 8-277 (NKRRTFAIIS…GLTEWAPKPQ (270 aa)). GTP contacts are provided by residues 17–24 (SHPDAGKT), 85–89 (DTPGH), and 139–142 (NKLD).

This sequence belongs to the TRAFAC class translation factor GTPase superfamily. Classic translation factor GTPase family. PrfC subfamily.

Its subcellular location is the cytoplasm. Functionally, increases the formation of ribosomal termination complexes and stimulates activities of RF-1 and RF-2. It binds guanine nucleotides and has strong preference for UGA stop codons. It may interact directly with the ribosome. The stimulation of RF-1 and RF-2 is significantly reduced by GTP and GDP, but not by GMP. The sequence is that of Peptide chain release factor 3 from Actinobacillus pleuropneumoniae serotype 3 (strain JL03).